The following is a 493-amino-acid chain: Aerolysin (493 aa).

Residues 1 to 23 form the signal peptide; it reads MQKIKLTGLSLIISGLLMAQAQA. Disulfide bonds link Cys42–Cys98 and Cys182–Cys187. The interval 68–84 is interaction with host N-linked glycan; that stretch reads WQISGLANGWVIMGPGY. A part of the transmembrane beta-barrel after proteolytic activation of the toxin and insertion into the host membrane region spans residues 256-288; it reads YGLSEKVTTKNKFKWPLVGETELSIEIAANQSW. The tract at residues 346-355 is interaction with glycans from host GPI-anchor; sequence RWGGNAWYTH. A propeptide spanning residues 446 to 493 is cleaved from the precursor; that stretch reads AADSKVRRARSVDGAGQGLRLEIPLDAQELSGLGFNNVSLSVTPAANQ.

This sequence belongs to the aerolysin family. Homodimer in solution; homoheptamer in the host membrane. After binding to GPI-anchored proteins in target membranes and proteolytic removal of the C-terminal propeptide, the protein assembles into a heptameric pre-pore complex. A further conformation change leads to insertion into the host membrane. Post-translationally, proteolytic cleavage and subsequent release of the propeptide trigger a major conformation change, leading to the formation of a heptameric pre-pore that then inserts into the host membrane.

Its subcellular location is the secreted. It is found in the host cell membrane. Its function is as follows. Secreted, cytolytic toxin that forms pores in host membranes after proteolytic removal of a C-terminal propeptide, leading to destruction of the membrane permeability barrier and host cell death. The pores are formed by transmembrane beta-strands and are approximately 3 nm in diameter. This Aeromonas hydrophila protein is Aerolysin (aerA).